A 519-amino-acid chain; its full sequence is MERGAAPGGGKVPVFRLRGITKRFGGVTAVEGVDFELLPGEVHALVGENGAGKSTLMKIVGGLYAPDEGSLEVGGEPAAFSSPRESEAAGIAMIPQELDLFPELSVAENLYVGRRRPRTRWGGIDWGRMRREAGEKLASLGVGLDVSAPVKRLSTANQQLVAIARALLREARAVVMDEPTAALTGREAERLFGIIAGLRRRGVGVVYISHRLEEIFRIADRITVLRDGHLVKTAPASALDPDELVRLMVGRPLSEFFSRHPHEPGEVVLEVRGLGREGEFADVDLVLRRGEVVGLAGLIGAGRTELAQTIFGIRTPDRGEVRVFGEVLPPGSPREAMERGVFYVPEERKSQGLIAPFSVKDNITLSVLERFTRFGFVSRGPERELAGRLAGALSVRGGGIFDPVSRLSGGNQQKVVLAKSLAREPAVLLLDEPTRGIDVGAKSEIYRLIDRLAGEGRAVLLISSELEEILSMSDRVVVMREGRISGEFGREEATQERIMAAATGVRGPSAAVAEEEAGR.

ABC transporter domains lie at F15 to P252 and H262 to R506. G47–S54 contacts ATP.

It belongs to the ABC transporter superfamily. Ribose importer (TC 3.A.1.2.1) family. The complex is composed of an ATP-binding protein (RbsA), two transmembrane proteins (RbsC) and a solute-binding protein (RbsB).

Its subcellular location is the cell membrane. It catalyses the reaction D-ribose(out) + ATP + H2O = D-ribose(in) + ADP + phosphate + H(+). In terms of biological role, part of the ABC transporter complex RbsABC involved in ribose import. Responsible for energy coupling to the transport system. This chain is Ribose import ATP-binding protein RbsA 2, found in Rubrobacter xylanophilus (strain DSM 9941 / JCM 11954 / NBRC 16129 / PRD-1).